A 291-amino-acid polypeptide reads, in one-letter code: 4-diphosphocytidyl-2-C-methyl-D-erythritol kinase (291 aa).

Lysine 11 is a catalytic residue. Residue 95-105 (PVAAGMAGGSS) coordinates ATP. Residue aspartate 137 is part of the active site.

It belongs to the GHMP kinase family. IspE subfamily.

It catalyses the reaction 4-CDP-2-C-methyl-D-erythritol + ATP = 4-CDP-2-C-methyl-D-erythritol 2-phosphate + ADP + H(+). Its pathway is isoprenoid biosynthesis; isopentenyl diphosphate biosynthesis via DXP pathway; isopentenyl diphosphate from 1-deoxy-D-xylulose 5-phosphate: step 3/6. In terms of biological role, catalyzes the phosphorylation of the position 2 hydroxy group of 4-diphosphocytidyl-2C-methyl-D-erythritol. This is 4-diphosphocytidyl-2-C-methyl-D-erythritol kinase from Lachnoclostridium phytofermentans (strain ATCC 700394 / DSM 18823 / ISDg) (Clostridium phytofermentans).